Here is a 218-residue protein sequence, read N- to C-terminus: MMP 1-O-methyltransferase (218 aa).

Residues F20, G46, S52, D71, G75, and S124 each coordinate S-adenosyl-L-methionine. Mg(2+) is bound at residue D141. Catalysis depends on H144, which acts as the Proton acceptor. R151 contributes to the S-adenosyl-L-methionine binding site. Mg(2+) contacts are provided by H169 and D170.

Belongs to the methyltransferase superfamily. As to quaternary structure, homodimer. The cofactor is Mg(2+).

It carries out the reaction 3,3'-di-O-methyl-4alpha-mannobiose + S-adenosyl-L-methionine = 1,3,3'-tri-O-methyl-4alpha-mannobiose + S-adenosyl-L-homocysteine + H(+). With respect to regulation, inhibited by EDTA. In terms of biological role, involved in the biosynthesis of 3-O-methylmannose polysaccharides (MMP), which are intracellular polymethylated polysaccharides implicated in the modulation of fatty acid metabolism in non-tuberculous mycobacteria. Specifically methylates the 1-OH position of 3,3'-di-O-methyl-4alpha-mannobiose, a probable early precursor of MMP, yielding the reducing end dimannoside of MMP. This is MMP 1-O-methyltransferase from Mycolicibacterium hassiacum (strain DSM 44199 / CIP 105218 / JCM 12690 / 3849) (Mycobacterium hassiacum).